The sequence spans 398 residues: Stomatin-like protein 1 (398 aa).

Residues 6–10 (GYRAL) carry the Tyrosine-type lysosomal sorting signal motif. Ser-28 is modified (phosphoserine). The chain crosses the membrane as a helical; Signal-anchor for type III membrane protein span at residues 58-78 (LISFLGFLLLLVTFPISGWFA). At 79–398 (LKIVPTYERM…KLEAVLRALK (320 aa)) the chain is on the cytoplasmic side. One can recognise an SCP2 domain in the interval 287-398 (KQPLAEGLLT…KLEAVLRALK (112 aa)).

Belongs to the band 7/mec-2 family. In terms of assembly, interacts with STOM; may redistribute STOM from the plasma membrane to late endosomes. Interacts with FBXW7 isoform 3 and CDK2. Ubiquitously expressed at low levels. Expression is highest in brain.

It is found in the membrane. The protein resides in the late endosome membrane. It localises to the membrane raft. Its subcellular location is the cell membrane. The protein localises to the cytoplasmic vesicle. In terms of biological role, may play a role in cholesterol transfer to late endosomes. May play a role in modulating membrane acid-sensing ion channels. Can specifically inhibit proton-gated current of ASIC1 isoform 1. Can increase inactivation speed of ASIC3. May be involved in regulation of proton sensing in dorsal root ganglions. May play a role in protecting FBXW7 isoform 3 from degradation. This chain is Stomatin-like protein 1 (STOML1), found in Homo sapiens (Human).